Consider the following 418-residue polypeptide: Tyrosine--tRNA ligase (418 aa).

Tyr39 contributes to the L-tyrosine binding site. The short motif at 44 to 53 is the 'HIGH' region element; that stretch reads CTADSLHVGS. The L-tyrosine site is built by Tyr176 and Gln180. The 'KMSKS' region motif lies at 236 to 240; that stretch reads KMGKT. Lys239 lines the ATP pocket. The 67-residue stretch at 350-416 folds into the S4 RNA-binding domain; that stretch reads LPLAEMMRAT…KKRHALIRVL (67 aa).

It belongs to the class-I aminoacyl-tRNA synthetase family. TyrS type 1 subfamily. As to quaternary structure, homodimer.

The protein localises to the cytoplasm. It carries out the reaction tRNA(Tyr) + L-tyrosine + ATP = L-tyrosyl-tRNA(Tyr) + AMP + diphosphate + H(+). Functionally, catalyzes the attachment of tyrosine to tRNA(Tyr) in a two-step reaction: tyrosine is first activated by ATP to form Tyr-AMP and then transferred to the acceptor end of tRNA(Tyr). The sequence is that of Tyrosine--tRNA ligase from Rhodospirillum rubrum (strain ATCC 11170 / ATH 1.1.1 / DSM 467 / LMG 4362 / NCIMB 8255 / S1).